The following is a 333-amino-acid chain: G-protein coupled receptor 146 (333 aa).

At 1–22 the chain is on the extracellular side; that stretch reads MWSCGPLNSTAWAEEPLCRNLR. Asparagine 8 carries N-linked (GlcNAc...) asparagine glycosylation. Residues 23–43 form a helical membrane-spanning segment; sequence LGLWVLSLLYLGAGVPVSLGY. The Cytoplasmic segment spans residues 44-64; the sequence is NALLVLANLASKNTMTMPDVY. The chain crosses the membrane as a helical span at residues 65 to 85; that stretch reads FVNMAVAGLVLTALAPAYLLG. The Extracellular segment spans residues 86-101; sequence PAHSRWALWSLSSEAH. Residues 102 to 122 form a helical membrane-spanning segment; it reads VTLLILFNVASLVTMYSTALL. Residues 123 to 145 are Cytoplasmic-facing; it reads SLDYYIERALPRTYMASVYNTRH. The chain crosses the membrane as a helical span at residues 146–166; the sequence is VCGFVWGGAVLTSFSSLLFYI. Topologically, residues 167–188 are extracellular; the sequence is CSHVSSRIAECARMQNTEAADA. Residues 189-209 traverse the membrane as a helical segment; sequence ILVLIGYVVPGLAVLYALALI. Residues 210–232 are Cytoplasmic-facing; the sequence is SRIGKEDTPLDQDTSRLDPSVHR. The chain crosses the membrane as a helical span at residues 233–253; that stretch reads LLVATVCTQFGLWTPYYLSLG. The Extracellular portion of the chain corresponds to 254-277; the sequence is HTVLTSRGRTVEGHYLGILQVAKD. Residues 278 to 298 traverse the membrane as a helical segment; it reads LAKFLAFSSSSVTPLLYRYIN. Over 299-333 the chain is Cytoplasmic; sequence KAFPGKLRRLMKKMHCGRRHCSPDPSGIQQVMAQA.

It belongs to the G-protein coupled receptor 1 family.

It localises to the cell membrane. In terms of biological role, GPCR receptor required for the regulation of plasma cholesterol levels. Receptor for CHLSN, a gut derived hormone which mediates an inhibitory effect of intestinal cholesterol absorption on hepatic cholesterol synthesis. Cholesin-binding exerts an antagonistic effect by inhibiting PKA signaling and suppressing SREBF2-controlled cholesterol in the liver. This chain is G-protein coupled receptor 146 (Gpr146), found in Mus musculus (Mouse).